The chain runs to 741 residues: Beta-galactosidase 10 (741 aa).

A signal peptide spans 1 to 29 (MNRVTTESIASTAILVVMVFLFSWRSIEA). Asn31 is a glycosylation site (N-linked (GlcNAc...) asparagine). Glu188 acts as the Proton donor in catalysis. Catalysis depends on Glu257, which acts as the Nucleophile. N-linked (GlcNAc...) asparagine glycans are attached at residues Asn358, Asn396, Asn469, Asn525, and Asn583.

This sequence belongs to the glycosyl hydrolase 35 family. In terms of tissue distribution, ubiquitous.

The protein localises to the secreted. The protein resides in the extracellular space. Its subcellular location is the apoplast. It carries out the reaction Hydrolysis of terminal non-reducing beta-D-galactose residues in beta-D-galactosides.. The protein is Beta-galactosidase 10 (BGAL10) of Arabidopsis thaliana (Mouse-ear cress).